The chain runs to 259 residues: 5'-nucleotidase SurE (259 aa).

A divalent metal cation-binding residues include D8, D9, S39, and N98.

The protein belongs to the SurE nucleotidase family. The cofactor is a divalent metal cation.

The protein localises to the cytoplasm. It carries out the reaction a ribonucleoside 5'-phosphate + H2O = a ribonucleoside + phosphate. Nucleotidase that shows phosphatase activity on nucleoside 5'-monophosphates. The sequence is that of 5'-nucleotidase SurE from Fervidobacterium nodosum (strain ATCC 35602 / DSM 5306 / Rt17-B1).